The chain runs to 146 residues: Hemoglobin subunit beta (146 aa).

Position 1 is an N-acetylvaline (V1). Residues 2–146 (HLTDAEKNLV…VANALAHKYH (145 aa)) form the Globin domain. H63 provides a ligand contact to heme b. N6-acetyllysine is present on K82. Heme b is bound at residue H92. An S-nitrosocysteine modification is found at C93. K144 bears the N6-acetyllysine mark.

This sequence belongs to the globin family. Heterotetramer of two alpha chains and two beta chains. In terms of tissue distribution, red blood cells.

In terms of biological role, involved in oxygen transport from the lung to the various peripheral tissues. In Mesocricetus brandti (Brandt's hamster), this protein is Hemoglobin subunit beta (HBB).